Here is a 291-residue protein sequence, read N- to C-terminus: F-box protein PP2-A12 (291 aa).

The F-box domain occupies 25–71 (KPGLGDLPEACVAIIVENLDPVEICRFSKLNRAFRGASWADCVWESK).

This is F-box protein PP2-A12 (P2A12) from Arabidopsis thaliana (Mouse-ear cress).